The following is a 582-amino-acid chain: Cryptochrome DASH, chloroplastic/mitochondrial (582 aa).

The transit peptide at 1–49 (MLHFLSSSSPLNPQFLLLPRQSARLRVLLSIPVSAMSSSSSSSSRGALA) directs the protein to the chloroplast and mitochondrion. Positions 84–234 (GVAIVWFRND…KLQLIWGATL (151 aa)) constitute a Photolyase/cryptochrome alpha/beta domain. Residues 560-582 (GHQKRDQQFNRQRRPGHMYRRQK) are disordered. The span at 570–582 (RQRRPGHMYRRQK) shows a compositional bias: basic residues.

It belongs to the DNA photolyase class-1 family. Requires FAD as cofactor. (6R)-5,10-methylene-5,6,7,8-tetrahydrofolate serves as cofactor.

Its subcellular location is the plastid. It is found in the chloroplast. The protein resides in the mitochondrion. In terms of biological role, may have a photoreceptor function. Binds ss- and ds-DNA in a sequence non-specific manner, lacks photolyase activity. This chain is Cryptochrome DASH, chloroplastic/mitochondrial (CRYD), found in Oryza sativa subsp. japonica (Rice).